A 191-amino-acid chain; its full sequence is Cytochrome c oxidase assembly protein CtaG (191 aa).

The Cytoplasmic segment spans residues 1–9 (MSLSPHQKT). A helical; Signal-anchor for type II membrane protein transmembrane segment spans residues 10-30 (AGGLVLVVAVMGAASFAAVPF). Over 31–191 (YNWFCRVTGF…LAAESATDVN (161 aa)) the chain is Periplasmic.

It belongs to the COX11/CtaG family.

It is found in the cell inner membrane. In terms of biological role, exerts its effect at some terminal stage of cytochrome c oxidase synthesis, probably by being involved in the insertion of the copper B into subunit I. The sequence is that of Cytochrome c oxidase assembly protein CtaG from Cereibacter sphaeroides (strain ATCC 17029 / ATH 2.4.9) (Rhodobacter sphaeroides).